Here is a 954-residue protein sequence, read N- to C-terminus: uncharacterized protein (954 aa).

Positions 1 to 35 (MKILFNNTFELFCLFVFVTWALFLNNNGILYPVHC) are cleaved as a signal peptide. Residues 381–415 (KNKISSARDDIQKDINKMESELINVSNEINRLDIV) adopt a coiled-coil conformation. The disordered stretch occupies residues 733–765 (NIRNDNNNNNNNNNNNSNNNNNNNNNNKDNSVA). The span at 736–763 (NDNNNNNNNNNNNSNNNNNNNNNNKDNS) shows a compositional bias: low complexity.

This is an uncharacterized protein from Plasmodium falciparum (isolate 3D7).